Reading from the N-terminus, the 89-residue chain is Co-chaperonin GroES (89 aa).

The protein belongs to the GroES chaperonin family. In terms of assembly, heptamer of 7 subunits arranged in a ring. Interacts with the chaperonin GroEL.

The protein localises to the cytoplasm. Together with the chaperonin GroEL, plays an essential role in assisting protein folding. The GroEL-GroES system forms a nano-cage that allows encapsulation of the non-native substrate proteins and provides a physical environment optimized to promote and accelerate protein folding. GroES binds to the apical surface of the GroEL ring, thereby capping the opening of the GroEL channel. In Porphyromonas gingivalis (strain ATCC 33277 / DSM 20709 / CIP 103683 / JCM 12257 / NCTC 11834 / 2561), this protein is Co-chaperonin GroES.